A 120-amino-acid polypeptide reads, in one-letter code: NAD(P)H-quinone oxidoreductase subunit 3 (120 aa).

A run of 3 helical transmembrane segments spans residues 10–30 (FLGF…TNLI), 64–84 (MFAL…PWAV), and 89–109 (LGLL…IALA).

Belongs to the complex I subunit 3 family. In terms of assembly, NDH-1 can be composed of about 15 different subunits; different subcomplexes with different compositions have been identified which probably have different functions.

It localises to the cellular thylakoid membrane. It carries out the reaction a plastoquinone + NADH + (n+1) H(+)(in) = a plastoquinol + NAD(+) + n H(+)(out). It catalyses the reaction a plastoquinone + NADPH + (n+1) H(+)(in) = a plastoquinol + NADP(+) + n H(+)(out). Functionally, NDH-1 shuttles electrons from an unknown electron donor, via FMN and iron-sulfur (Fe-S) centers, to quinones in the respiratory and/or the photosynthetic chain. The immediate electron acceptor for the enzyme in this species is believed to be plastoquinone. Couples the redox reaction to proton translocation, and thus conserves the redox energy in a proton gradient. Cyanobacterial NDH-1 also plays a role in inorganic carbon-concentration. In Prochlorococcus marinus (strain MIT 9515), this protein is NAD(P)H-quinone oxidoreductase subunit 3.